We begin with the raw amino-acid sequence, 295 residues long: Diaminopimelate epimerase (295 aa).

Residues Asn13, Gln46, and Asn66 each coordinate substrate. The active-site Proton donor is Cys75. Residues 76–77, Asn162, Asn195, and 213–214 each bind substrate; these read GN and ER. Cys222 (proton acceptor) is an active-site residue. 223–224 contributes to the substrate binding site; the sequence is GT.

Belongs to the diaminopimelate epimerase family. As to quaternary structure, homodimer.

The protein localises to the cytoplasm. It carries out the reaction (2S,6S)-2,6-diaminopimelate = meso-2,6-diaminopimelate. The protein operates within amino-acid biosynthesis; L-lysine biosynthesis via DAP pathway; DL-2,6-diaminopimelate from LL-2,6-diaminopimelate: step 1/1. Functionally, catalyzes the stereoinversion of LL-2,6-diaminopimelate (L,L-DAP) to meso-diaminopimelate (meso-DAP), a precursor of L-lysine and an essential component of the bacterial peptidoglycan. This chain is Diaminopimelate epimerase, found in Psychrobacter cryohalolentis (strain ATCC BAA-1226 / DSM 17306 / VKM B-2378 / K5).